A 471-amino-acid polypeptide reads, in one-letter code: uncharacterized protein (471 aa).

The next 4 helical transmembrane spans lie at 10–30 (ALWLLDFLTFNISFLLSLFVI), 46–66 (IDDRTYIHAVLAGICVGWFAI), 87–107 (TLIIFAIFELAIVAFPKLYFS), and 280–300 (IVVGSLAIIIFSPVLLYLYFA).

This sequence belongs to the bacterial sugar transferase family.

It localises to the cell membrane. It participates in glycan metabolism; exopolysaccharide biosynthesis. In terms of biological role, may function as a sugar transferase. This is an uncharacterized protein from Haemophilus influenzae (strain ATCC 51907 / DSM 11121 / KW20 / Rd).